Here is a 202-residue protein sequence, read N- to C-terminus: Small ribosomal subunit protein uS5 (202 aa).

One can recognise an S5 DRBM domain in the interval 50-113; the sequence is LKQEILNINV…REAKLNLTPV (64 aa).

It belongs to the universal ribosomal protein uS5 family. Part of the 30S ribosomal subunit. Contacts protein S4.

In terms of biological role, with S4 and S12 plays an important role in translational accuracy. The polypeptide is Small ribosomal subunit protein uS5 (Pyrobaculum islandicum (strain DSM 4184 / JCM 9189 / GEO3)).